A 298-amino-acid chain; its full sequence is Ribosomal RNA small subunit methyltransferase A (298 aa).

S-adenosyl-L-methionine contacts are provided by Asn-35, Leu-37, Gly-62, Glu-83, Asp-108, and Asn-133.

The protein belongs to the class I-like SAM-binding methyltransferase superfamily. rRNA adenine N(6)-methyltransferase family. RsmA subfamily.

It localises to the cytoplasm. The enzyme catalyses adenosine(1518)/adenosine(1519) in 16S rRNA + 4 S-adenosyl-L-methionine = N(6)-dimethyladenosine(1518)/N(6)-dimethyladenosine(1519) in 16S rRNA + 4 S-adenosyl-L-homocysteine + 4 H(+). Its function is as follows. Specifically dimethylates two adjacent adenosines (A1518 and A1519) in the loop of a conserved hairpin near the 3'-end of 16S rRNA in the 30S particle. May play a critical role in biogenesis of 30S subunits. The polypeptide is Ribosomal RNA small subunit methyltransferase A (Streptococcus pyogenes serotype M2 (strain MGAS10270)).